The following is a 245-amino-acid chain: 1-(5-phosphoribosyl)-5-[(5-phosphoribosylamino)methylideneamino] imidazole-4-carboxamide isomerase (245 aa).

Asp11 acts as the Proton acceptor in catalysis. Asp132 (proton donor) is an active-site residue.

It belongs to the HisA/HisF family.

It is found in the cytoplasm. The enzyme catalyses 1-(5-phospho-beta-D-ribosyl)-5-[(5-phospho-beta-D-ribosylamino)methylideneamino]imidazole-4-carboxamide = 5-[(5-phospho-1-deoxy-D-ribulos-1-ylimino)methylamino]-1-(5-phospho-beta-D-ribosyl)imidazole-4-carboxamide. Its pathway is amino-acid biosynthesis; L-histidine biosynthesis; L-histidine from 5-phospho-alpha-D-ribose 1-diphosphate: step 4/9. This Bacillus licheniformis (strain ATCC 14580 / DSM 13 / JCM 2505 / CCUG 7422 / NBRC 12200 / NCIMB 9375 / NCTC 10341 / NRRL NRS-1264 / Gibson 46) protein is 1-(5-phosphoribosyl)-5-[(5-phosphoribosylamino)methylideneamino] imidazole-4-carboxamide isomerase.